A 206-amino-acid chain; its full sequence is Probable GTP-binding protein EngB (206 aa).

The EngB-type G domain maps to 23 to 195 (DLLEIAFVGR…WARIEAIMAE (173 aa)). GTP-binding positions include 31–38 (GRSNVGKS), 58–62 (GRTQL), 76–79 (DLPG), 143–146 (TKCD), and 174–176 (FSA). 2 residues coordinate Mg(2+): Ser38 and Thr60.

It belongs to the TRAFAC class TrmE-Era-EngA-EngB-Septin-like GTPase superfamily. EngB GTPase family. It depends on Mg(2+) as a cofactor.

Its function is as follows. Necessary for normal cell division and for the maintenance of normal septation. This Geobacter sulfurreducens (strain ATCC 51573 / DSM 12127 / PCA) protein is Probable GTP-binding protein EngB.